We begin with the raw amino-acid sequence, 243 residues long: Cysteine-rich secretory protein 2 (243 aa).

An N-terminal signal peptide occupies residues 1 to 21 (MALLPVLFLVTVLLPSLPAEG). One can recognise an SCP domain in the interval 41–169 (VNKHNELRKA…SLKYYYVCQY (129 aa)). Disulfide bonds link C189-C196, C192-C201, C205-C238, C214-C232, and C223-C236. One can recognise a ShKT domain in the interval 205 to 238 (CQYQDLLSNCDSLKNTAGCEHELLKEKCKATCLC).

This sequence belongs to the CRISP family. Interacts with NSUN4 isoform 3. As to expression, testis and epididymis.

The protein resides in the secreted. Functionally, may regulate some ion channels' activity and thereby regulate calcium fluxes during sperm capacitation. In Homo sapiens (Human), this protein is Cysteine-rich secretory protein 2 (CRISP2).